The following is a 133-amino-acid chain: Pheromone-regulated membrane protein 3 (133 aa).

Residues M1–S104 lie on the Nuclear side of the membrane. Positions A36–E100 are disordered. The Bipartite nuclear localization signal motif lies at G69–K75. The span at K90 to E100 shows a compositional bias: basic and acidic residues. The chain crosses the membrane as a helical span at residues F105–A127. Over V128–N133 the chain is Perinuclear space.

In terms of assembly, interacts with KAR5.

It is found in the nucleus outer membrane. The protein resides in the cytoplasm. The protein localises to the cytoskeleton. Its subcellular location is the microtubule organizing center. It localises to the spindle pole body. In terms of biological role, required for the fusion of nuclear envelopes during mating, ensuring proper karyogamy. Plays a role in the initiation of outer nuclear envelope fusion. In Saccharomyces cerevisiae (strain ATCC 204508 / S288c) (Baker's yeast), this protein is Pheromone-regulated membrane protein 3 (PRM3).